Consider the following 465-residue polypeptide: Ribulose bisphosphate carboxylase large chain (465 aa).

Lysine 4 bears the N6,N6,N6-trimethyllysine mark. The substrate site is built by asparagine 113 and threonine 163. The active-site Proton acceptor is lysine 165. A substrate-binding site is contributed by lysine 167. Mg(2+) is bound by residues lysine 191, aspartate 193, and glutamate 194. Lysine 191 is subject to N6-carboxylysine. The active-site Proton acceptor is histidine 284. Positions 285, 317, and 369 each coordinate substrate.

This sequence belongs to the RuBisCO large chain family. Type I subfamily. In terms of assembly, heterohexadecamer of 8 large chains and 8 small chains. Mg(2+) is required as a cofactor.

It is found in the plastid. Its subcellular location is the chloroplast. The enzyme catalyses 2 (2R)-3-phosphoglycerate + 2 H(+) = D-ribulose 1,5-bisphosphate + CO2 + H2O. It carries out the reaction D-ribulose 1,5-bisphosphate + O2 = 2-phosphoglycolate + (2R)-3-phosphoglycerate + 2 H(+). In terms of biological role, ruBisCO catalyzes two reactions: the carboxylation of D-ribulose 1,5-bisphosphate, the primary event in carbon dioxide fixation, as well as the oxidative fragmentation of the pentose substrate in the photorespiration process. Both reactions occur simultaneously and in competition at the same active site. This is Ribulose bisphosphate carboxylase large chain from Sarracenia flava (Yellow pitcher plant).